The sequence spans 166 residues: NADH-quinone oxidoreductase subunit B 1 (166 aa).

The [4Fe-4S] cluster site is built by Cys39, Cys40, Cys106, and Cys135.

The protein belongs to the complex I 20 kDa subunit family. NDH-1 is composed of 14 different subunits. Subunits NuoB, C, D, E, F, and G constitute the peripheral sector of the complex. Requires [4Fe-4S] cluster as cofactor.

The protein resides in the cell membrane. It catalyses the reaction a quinone + NADH + 5 H(+)(in) = a quinol + NAD(+) + 4 H(+)(out). Functionally, NDH-1 shuttles electrons from NADH, via FMN and iron-sulfur (Fe-S) centers, to quinones in the respiratory chain. The immediate electron acceptor for the enzyme in this species is believed to be a menaquinone. Couples the redox reaction to proton translocation (for every two electrons transferred, four hydrogen ions are translocated across the cytoplasmic membrane), and thus conserves the redox energy in a proton gradient. In Symbiobacterium thermophilum (strain DSM 24528 / JCM 14929 / IAM 14863 / T), this protein is NADH-quinone oxidoreductase subunit B 1.